A 272-amino-acid polypeptide reads, in one-letter code: tRNA (guanine-N(7)-)-methyltransferase (272 aa).

Positions 1 to 20 (MSTDSESKRRAYREEKEGAR) are enriched in basic and acidic residues. The disordered stretch occupies residues 1–43 (MSTDSESKRRAYREEKEGARKKSVKLAPEATPESKPDLPRKRY). S-adenosyl-L-methionine contacts are provided by residues G89, 112 to 113 (EI), 148 to 149 (NA), and C168. Residue D171 is part of the active site. An S-adenosyl-L-methionine-binding site is contributed by 246-248 (TEE).

It belongs to the class I-like SAM-binding methyltransferase superfamily. TrmB family. In terms of assembly, forms a complex with TRM82.

Its subcellular location is the nucleus. It catalyses the reaction guanosine(46) in tRNA + S-adenosyl-L-methionine = N(7)-methylguanosine(46) in tRNA + S-adenosyl-L-homocysteine. It participates in tRNA modification; N(7)-methylguanine-tRNA biosynthesis. In terms of biological role, catalyzes the formation of N(7)-methylguanine at position 46 (m7G46) in tRNA. The protein is tRNA (guanine-N(7)-)-methyltransferase of Meyerozyma guilliermondii (strain ATCC 6260 / CBS 566 / DSM 6381 / JCM 1539 / NBRC 10279 / NRRL Y-324) (Yeast).